A 297-amino-acid polypeptide reads, in one-letter code: Polyhedral envelope protein (297 aa).

Belongs to the baculoviridae PE family.

It is found in the virion membrane. Functionally, major component of the polyhedra envelope. This is Polyhedral envelope protein from Orgyia pseudotsugata (Douglas-fir tussock moth).